Reading from the N-terminus, the 233-residue chain is Large ribosomal subunit protein uL1 (233 aa).

It belongs to the universal ribosomal protein uL1 family. In terms of assembly, part of the 50S ribosomal subunit.

Its function is as follows. Binds directly to 23S rRNA. The L1 stalk is quite mobile in the ribosome, and is involved in E site tRNA release. Protein L1 is also a translational repressor protein, it controls the translation of the L11 operon by binding to its mRNA. This is Large ribosomal subunit protein uL1 from Deinococcus deserti (strain DSM 17065 / CIP 109153 / LMG 22923 / VCD115).